The following is a 1366-amino-acid chain: MKTVILLHLFFYCTIAMAKTISGVFTSFNSLTYTNTGNYPYGGPGYPTWTAVLGWSLDGTLASPGDTFTLVMPCVFKFITTQTSVDLTANGVKYATCTFHAGEDFTTFSSMSCVVNNGLSSNIRAFGTVRLPISFNVGGTGSSVNIQDSKCFTAGTNTVTFTDGDHKISTTVNFPKTPQSSSSLVYFARVIPSLDKLSSLVVASQCTAGYASGVLGFSATKDDVTIDCSTIHVGITNGLNSWNMPVSSESFSYTKTCTPNSFIITYENVPAGYRPFIDSYVKKSATATNGFNLNYTNIYNCMDGKKGNDPLIYFWTSYTNSDAGSNGAAVVVTTRTVTDSTTAITTLPFDPTVDKTKTIEVIEPIPTTTITTSYVGISTSLSTKTATIGGTATVVVDVPYHTTTTITSIWTGSATTSSTYTNPTDSIDTVVVQVPSPNPTVTTTQFWSGSVPTTETVTTGPQGTDSVIIKEPHNPTVTTTEFWSESFATTETVTNGPEGTDSVIVREPHNPTVTTTEFWSESFATTETVTNGPEGTDSVIVREPHNPTVTTTEFWSESFATTETITTGPLGTDSIVIHDPLEESSSSTAIESSDSNISSSAQESSSSVEQSLTSADETSSIVELSSSSDIPSSSIGLTSSESSTVSSYDSYSSSTSESSIASSYDSYWSSSIESSTLSSSDRYSSSISDTTSFWDSSSSDLESTSITWSSSIDAQSSHLVQSVSNSISTSQELSSSSSEESSTSATDALVSSDASSILSSDTSSYYPSSTISPSDDFPHTIAGESDSQSISFITSTVEISSDSVSLTSDPASSFDSSSSLNSDSSSSPSSDQSDILTSSSFSTLVVPSFSLSSSSSLSLTYPHYVNSTTYHASESESSSVASPSMASESANDDTHTLSESTDTTSSIGTDSSTVTFCRRDNGDGCIVTGMPSSSIDSEQTSDVTTTSSFVASSTPTSAEQSITDNPNIDSSQTSASSSTKLSVFVSDTVVNSISLSETSTLSSDDSTSSDTSISSTTNSDTGNINAGSSHTSTASIKESSIQKTGVMLSSSYLSTKLSSTSDITTELITTELTTTELTTIEDNEPNTFTSTPSSHSEIFSSDNSVLSKQVDGESTVEIPPVTDTTTVSSVSVHSIEASTATLGENSFSKVASAPVNTETSLRSTSSSSNHATESSGTVKSEASAEAIPSPPTSTDNRLSYSTEEAKGSTYANSGSTNNLMTESQVAAPTDSTSVLTANPVVTSTFDDKSSAAVNQPSKTKSIEESIGSLDSVNETNNGFIATLSQSEAPNSLIHSESISTTMAKTTDASINGDSAASNSQPTTLIQQVATSSYNQPLITTYAGSSSATKHPSWLLKFISVALFFFL.

The N-terminal stretch at 1–18 is a signal peptide; that stretch reads MKTVILLHLFFYCTIAMA. Intrachain disulfides connect C74/C151, C97/C113, C206/C301, and C228/C257. N294 carries an N-linked (GlcNAc...) asparagine glycan. ALS repeat units lie at residues 368–399, 404–435, 441–472, 477–508, 513–544, and 549–580; these read TTIT…VDVP, TTIT…VQVP, VTTT…IKEP, VTTT…VREP, and VTTT…IHDP. The tract at residues 449–470 is disordered; that stretch reads GSVPTTETVTTGPQGTDSVIIK. Over residues 451-464 the composition is skewed to low complexity; that stretch reads VPTTETVTTGPQGT. Disordered regions lie at residues 583 to 658, 758 to 780, and 804 to 833; these read ESSS…TSES, LSSD…FPHT, and VSLT…SDQS. N596 carries an N-linked (GlcNAc...) asparagine glycan. 2 stretches are compositionally biased toward low complexity: residues 758-775 and 805-833; these read LSSD…SPSD and SLTS…SDQS. A glycan (N-linked (GlcNAc...) asparagine) is linked at N866. Disordered stretches follow at residues 874–915, 928–976, 996–1040, 1081–1130, and 1158–1218; these read ESES…STVT, TGMP…TSAS, SETS…KESS, EDNE…VSSV, and ETSL…STNN. Low complexity-rich tracts occupy residues 875–889, 898–915, and 940–958; these read SESS…ASES, SEST…STVT, and TSDV…PTSA. A compositionally biased stretch (polar residues) spans 959–969; that stretch reads EQSITDNPNID. The span at 996-1021 shows a compositional bias: low complexity; that stretch reads SETSTLSSDDSTSSDTSISSTTNSDT. Composition is skewed to polar residues over residues 1022-1040 and 1085-1107; these read GNIN…KESS and PNTF…SVLS. Low complexity-rich tracts occupy residues 1121–1130 and 1158–1177; these read VTDTTTVSSV and ETSL…SSGT. 2 stretches are compositionally biased toward polar residues: residues 1192–1202 and 1209–1218; these read TSTDNRLSYST and TYANSGSTNN. N1273 carries N-linked (GlcNAc...) asparagine glycosylation. Residue S1345 is the site of GPI-anchor amidated serine attachment. A propeptide spans 1346 to 1366 (removed in mature form); it reads SATKHPSWLLKFISVALFFFL.

Belongs to the ALS family. Post-translationally, the GPI-anchor is attached to the protein in the endoplasmic reticulum and serves to target the protein to the cell surface. There, the glucosamine-inositol phospholipid moiety is cleaved off and the GPI-modified mannoprotein is covalently attached via its lipidless GPI glycan remnant to the 1,6-beta-glucan of the outer cell wall layer.

It localises to the cell membrane. The protein resides in the secreted. Its subcellular location is the cell wall. In terms of biological role, cell surface adhesion protein which mediates both yeast-to-host tissue adherence and yeast aggregation. Plays an important role in the pathogenesis of C.albicans infections. The sequence is that of Agglutinin-like protein 6 (ALS6) from Candida albicans (strain SC5314 / ATCC MYA-2876) (Yeast).